We begin with the raw amino-acid sequence, 879 residues long: Metabotropic glutamate receptor 3 (879 aa).

The N-terminal stretch at 1 to 24 is a signal peptide; it reads MKMLTRLQVLTLALFSKGFLLSLG. Over 25–577 the chain is Extracellular; it reads DHNFLRREIK…DYIRWEDAWA (553 aa). Residues Cys-57 and Cys-99 are joined by a disulfide bond. L-glutamate-binding positions include Ser-151 and 172-174; that span reads AST. N-linked (GlcNAc...) asparagine glycosylation occurs at Asn-209. Position 222 (Tyr-222) interacts with L-glutamate. Disulfide bonds link Cys-240/Cys-527, Cys-361/Cys-373, Cys-412/Cys-419, Cys-509/Cys-528, Cys-513/Cys-531, Cys-534/Cys-546, and Cys-549/Cys-562. Asn-292 carries an N-linked (GlcNAc...) asparagine glycan. Residue Asp-301 participates in L-glutamate binding. Lys-389 contributes to the L-glutamate binding site. Residues Asn-414 and Asn-439 are each glycosylated (N-linked (GlcNAc...) asparagine). A helical membrane pass occupies residues 578-598; that stretch reads IGPVTIACLGFMCTCMVITVF. Residues 599–613 are Cytoplasmic-facing; it reads IKHNNTPLVKASGRE. Residues 614–634 traverse the membrane as a helical segment; it reads LCYILLFGVGLSYCMTFFFIA. Residues 635-688 are Extracellular-facing; sequence KPSPVICALRRLGLGSSFAICYSALLTKTNCIARIFDGVKNGAQRPKFISPSSQ. The helical transmembrane segment at 689 to 709 threads the bilayer; the sequence is VFICLGLILVQIVMVSVWLIL. Residues 710–735 lie on the Cytoplasmic side of the membrane; the sequence is EAPGTRRYTLAEKRETVILKCNVKDS. A helical transmembrane segment spans residues 736–756; the sequence is SMLISLTYDVILVILCTVYAF. Residues 757–769 lie on the Extracellular side of the membrane; it reads KTRKCPENFNEAK. The chain crosses the membrane as a helical span at residues 770 to 790; that stretch reads FIGFTMYTTCIIWLAFLPIFY. The Cytoplasmic portion of the chain corresponds to 791–807; that stretch reads VTSSDYRVQTTTMCISV. A helical transmembrane segment spans residues 808-828; it reads SLSGFVVLGCLFAPKVHIILF. Residues 829 to 879 are Extracellular-facing; it reads QPQKNVVTHRLHLNRFSVSGTGTTYSQSSASMYVPTVCNGREVLDSTTSSL.

This sequence belongs to the G-protein coupled receptor 3 family. As to quaternary structure, interacts with TAMALIN.

The protein localises to the cell membrane. Functionally, G-protein coupled receptor for glutamate. Ligand binding causes a conformation change that triggers signaling via guanine nucleotide-binding proteins (G proteins) and modulates the activity of down-stream effectors. Signaling inhibits adenylate cyclase activity. In Macaca fascicularis (Crab-eating macaque), this protein is Metabotropic glutamate receptor 3 (GRM3).